Consider the following 460-residue polypeptide: Cysteine--tRNA ligase (460 aa).

Zn(2+) is bound at residue C28. The short motif at V30–H40 is the 'HIGH' region element. 3 residues coordinate Zn(2+): C209, H234, and E238. The 'KMSKS' region signature appears at K266–S270. Position 269 (K269) interacts with ATP.

Belongs to the class-I aminoacyl-tRNA synthetase family. Monomer. It depends on Zn(2+) as a cofactor.

It is found in the cytoplasm. The catalysed reaction is tRNA(Cys) + L-cysteine + ATP = L-cysteinyl-tRNA(Cys) + AMP + diphosphate. This Vibrio vulnificus (strain CMCP6) protein is Cysteine--tRNA ligase.